Reading from the N-terminus, the 309-residue chain is Homoserine O-succinyltransferase (309 aa).

Catalysis depends on cysteine 142, which acts as the Acyl-thioester intermediate. 2 residues coordinate substrate: lysine 163 and serine 192. Histidine 235 acts as the Proton acceptor in catalysis. The active site involves glutamate 237. Arginine 249 contacts substrate.

Belongs to the MetA family. In terms of assembly, homodimer.

It is found in the cytoplasm. The catalysed reaction is L-homoserine + succinyl-CoA = O-succinyl-L-homoserine + CoA. It participates in amino-acid biosynthesis; L-methionine biosynthesis via de novo pathway; O-succinyl-L-homoserine from L-homoserine: step 1/1. Functionally, transfers a succinyl group from succinyl-CoA to L-homoserine, forming succinyl-L-homoserine. The chain is Homoserine O-succinyltransferase from Salmonella choleraesuis (strain SC-B67).